We begin with the raw amino-acid sequence, 275 residues long: Penicillin-insensitive murein endopeptidase (275 aa).

An N-terminal signal peptide occupies residues 1–19 (MKNWIVGMVALVTMVPVMA). 3 cysteine pairs are disulfide-bonded: Cys44–Cys264, Cys187–Cys235, and Cys216–Cys223. Positions 110, 113, 120, 147, and 211 each coordinate Zn(2+). The tract at residues 227-262 (DTPPPGDGCGAELESWFQPPPPSAKPGKTLPPPLPP) is disordered. Positions 244–262 (QPPPPSAKPGKTLPPPLPP) are enriched in pro residues.

It belongs to the peptidase M74 family. As to quaternary structure, dimer. It depends on Zn(2+) as a cofactor.

It localises to the periplasm. Murein endopeptidase that cleaves the D-alanyl-meso-2,6-diamino-pimelyl amide bond that connects peptidoglycan strands. Likely plays a role in the removal of murein from the sacculus. This is Penicillin-insensitive murein endopeptidase from Yersinia pestis bv. Antiqua (strain Antiqua).